Here is a 315-residue protein sequence, read N- to C-terminus: GTP cyclohydrolase MptA (315 aa).

The protein belongs to the GTP cyclohydrolase IV family. In terms of assembly, homodimer. The cofactor is Fe(2+).

The enzyme catalyses GTP + H2O = 7,8-dihydroneopterin 2',3'-cyclic phosphate + formate + diphosphate + H(+). It participates in cofactor biosynthesis; 5,6,7,8-tetrahydromethanopterin biosynthesis. In terms of biological role, converts GTP to 7,8-dihydro-D-neopterin 2',3'-cyclic phosphate, the first intermediate in the biosynthesis of coenzyme methanopterin. This is GTP cyclohydrolase MptA from Methanococcus maripaludis (strain C7 / ATCC BAA-1331).